We begin with the raw amino-acid sequence, 205 residues long: Thymidylate kinase (205 aa).

ATP is bound at residue 10–17 (GTEGVGKS).

This sequence belongs to the thymidylate kinase family.

It catalyses the reaction dTMP + ATP = dTDP + ADP. Functionally, phosphorylation of dTMP to form dTDP in both de novo and salvage pathways of dTTP synthesis. This is Thymidylate kinase from Teredinibacter turnerae (strain ATCC 39867 / T7901).